Here is an 840-residue protein sequence, read N- to C-terminus: MIFTLKLFKKLFRNRNERILVHMKKIVDMINYMEKDMEKLNDNQLSNKTNEFRMQIKSGINIEELLPQAFAVVRESVKRIFNIRLFDVQMLGGIVLNNRCIAEMRTGEGKTLTATLPAYLNALTGKGVHIVTVNNYLAHRDATYNQPLFEFLGLNVGINLPGQTVCAKKIAYESDITYGTNNEYGFDYLRDNMVFNVKEQVQRELHYALIDEVDSILIDEARTPLIISGPSDDASLSYLKINELVCNIIKRNIDHCKYPEKEEYFTVDEKSRQVVLTEIGLILIEKLLIESGMMGMGESLYSSDNIILLHHVNSALRAHILFACEVDYIVKNGEILIIDEHTGRVMPGRRWSDGLHQAIEAKERVRIQNENQTLASITFQNYFRLYEKLSGMTGTASTESFEFKSIYKLDTVVIPTNQPMIRIDFPDVIYMTEIEKINAIVSDIKDCVNRKQPVLVGTVSIDKSEIISRALKKEGILHKVLNAKIHAAEADIIAQAGYPGAVTIATNMAGRGTDIVLGGNWRSEIAALRNANTHAMLRIKSDWKERHDSVLKSGGLHVIGTERHESRRIDNQLRGRSGRQGDAGSSRFYLSMEDSLIRIFASNKLVDLMKRMGMKSGESIEHPWITKAIAHAQKKVESRNFDIRKQLLEYDDVANDQRRVIYEQRNKLLAMLDVSEVIHNIRYDVVDRILNIYIPLEIIENKKDLIKLEKCLKDDFNLVLSFSEQLDEDTSLYEGKEKIRVCILTEMIKQYKCVKEMVGINVMNAIEKGIILKTFDALWKEHLASMDYLRQGIHLRGYAQKDPKQEYKKESFSMFKKMLDHLQYEIISEISKLQKLNRSN.

Residues Q89, 107–111 (GEGKT), and D514 contribute to the ATP site.

It belongs to the SecA family. As to quaternary structure, monomer and homodimer. Part of the essential Sec protein translocation apparatus which comprises SecA, SecYEG and auxiliary proteins SecDF-YajC and YidC.

The protein resides in the cell inner membrane. Its subcellular location is the cytoplasm. The enzyme catalyses ATP + H2O + cellular proteinSide 1 = ADP + phosphate + cellular proteinSide 2.. Part of the Sec protein translocase complex. Interacts with the SecYEG preprotein conducting channel. Has a central role in coupling the hydrolysis of ATP to the transfer of proteins into and across the cell membrane, serving as an ATP-driven molecular motor driving the stepwise translocation of polypeptide chains across the membrane. The polypeptide is Protein translocase subunit SecA (Blochmanniella floridana).